We begin with the raw amino-acid sequence, 208 residues long: MVGLIGQKVGMTQIFDARGCVTPVTVIRVEHNVVVGLKDVERFGYSAVILGTGCMKKSRISKPYAGQFAERIPPVRVMREFRGFTLDVSVGQVLDVRVLESVRYLDVCALSKGKGFQGVVKRWGFSGGRSSHGSKFHREAGSTGQCTSPGRTFKNVKMPGRMGAERVTVQNLRIERIDVGLGVVMVRGAVPGRNKATVFLRTAVKRER.

The disordered stretch occupies residues 134-153; that stretch reads SKFHREAGSTGQCTSPGRTF.

The protein belongs to the universal ribosomal protein uL3 family. Part of the 50S ribosomal subunit. Forms a cluster with proteins L14 and L19.

Its function is as follows. One of the primary rRNA binding proteins, it binds directly near the 3'-end of the 23S rRNA, where it nucleates assembly of the 50S subunit. The polypeptide is Large ribosomal subunit protein uL3 (Treponema pallidum (strain Nichols)).